The chain runs to 387 residues: Patatin-02 (387 aa).

The N-terminal stretch at 1 to 23 is a signal peptide; sequence MATTKSFLILIVMILATTSSTFA. In terms of domain architecture, PNPLA spans 32-230; it reads LSIDGGGIKG…TVADPALLSV (199 aa). Positions 36–41 match the GXGXXG motif; sequence GGGIKG. The short motif at 75 to 79 is the GXSXG element; it reads GTSTG. Catalysis depends on S77, which acts as the Nucleophile. A glycan (N-linked (GlcNAc...) asparagine) is linked at N115. Residue D216 is the Proton acceptor of the active site. The DGA/G signature appears at 216–218; sequence DGA. A coiled-coil region spans residues 361–385; the sequence is ETYEEALKRFAKLLSDRKKLRANKA.

It belongs to the patatin family. As to expression, tuber and stolon.

It is found in the vacuole. Probable lipolytic acyl hydrolase (LAH), an activity which is thought to be involved in the response of tubers to pathogens. This is Patatin-02 from Solanum tuberosum (Potato).